We begin with the raw amino-acid sequence, 301 residues long: Transcription elongation factor A protein 1 (301 aa).

Position 1 is an N-acetylmethionine (Met-1). Residues 3–80 form the TFIIS N-terminal domain; the sequence is DEVVRIAKKM…KSWKKLLDGP (78 aa). Residue Lys-55 forms a Glycyl lysine isopeptide (Lys-Gly) (interchain with G-Cter in ubiquitin) linkage. A phosphoserine mark is found at Ser-57, Ser-81, Ser-97, and Ser-100. A compositionally biased stretch (basic and acidic residues) spans 76-93; sequence LLDGPSTDKDPEEKKKEP. Positions 76–139 are disordered; it reads LLDGPSTDKD…FPRAPSTSDS (64 aa). Positions 140-256 constitute a TFIIS central domain; it reads VRLKCREMLA…EHQMAKTGGT (117 aa). A TFIIS-type zinc finger spans residues 259–299; it reads DLFTCGKCKKKNCTYTQVQTRSADEPMTTFVVCNECGNRWK. 4 residues coordinate Zn(2+): Cys-263, Cys-266, Cys-291, and Cys-294.

The protein belongs to the TFS-II family. As to quaternary structure, interacts with EAF2. Associates with UBR5 and forms a transcription regulatory complex made of CDK9, Pol II, UBR5 and TCEA1/TFIIS. Part of TBP-based Pol II pre-initiation complex (PIC), in which Pol II core assembles with general transcription factors and other specific initiation factors including GTF2E1, GTF2E2, GTF2F1, GTF2F2, TCEA1, ERCC2, ERCC3, GTF2H2, GTF2H3, GTF2H4, GTF2H5, GTF2A1, GTF2A2, GTF2B and TBP; this large multi-subunit PIC complex mediates DNA unwinding and targets Pol II core to the transcription start site where the first phosphodiester bond forms.

It is found in the nucleus. Necessary for efficient RNA polymerase II transcription elongation past template-encoded arresting sites. The arresting sites in DNA have the property of trapping a certain fraction of elongating RNA polymerases that pass through, resulting in locked ternary complexes. Cleavage of the nascent transcript by S-II allows the resumption of elongation from the new 3'-terminus. In Mus musculus (Mouse), this protein is Transcription elongation factor A protein 1 (Tcea1).